We begin with the raw amino-acid sequence, 560 residues long: Putative protease Do-like 11, mitochondrial (560 aa).

The N-terminal 65 residues, 1 to 65 (MFFRPCVHTV…RRSSTSAAER (65 aa)), are a transit peptide targeting the mitochondrion. The segment at 117–302 (TEYSKSKPWK…ESRQYSCFGS (186 aa)) is serine protease. Catalysis depends on charge relay system residues histidine 150, aspartate 184, and serine 258. The 97-residue stretch at 288–384 (ITSVQESRQY…YLVSMKKPGE (97 aa)) folds into the PDZ domain.

It belongs to the peptidase S1C family.

The protein resides in the mitochondrion membrane. Functionally, putative serine protease. The protein is Putative protease Do-like 11, mitochondrial (DEGP11) of Arabidopsis thaliana (Mouse-ear cress).